A 341-amino-acid chain; its full sequence is 4-hydroxy-2-oxovalerate aldolase (341 aa).

The 251-residue stretch at V9–M259 folds into the Pyruvate carboxyltransferase domain. Substrate is bound at residue R17 to D18. D18 lines the Mn(2+) pocket. Residue H21 is the Proton acceptor of the active site. Substrate-binding residues include S171 and H198. 2 residues coordinate Mn(2+): H198 and H200. A substrate-binding site is contributed by Y289.

Belongs to the 4-hydroxy-2-oxovalerate aldolase family.

It carries out the reaction (S)-4-hydroxy-2-oxopentanoate = acetaldehyde + pyruvate. The chain is 4-hydroxy-2-oxovalerate aldolase from Bacillus thuringiensis (strain Al Hakam).